A 289-amino-acid chain; its full sequence is Lipoyl synthase 2 (289 aa).

[4Fe-4S] cluster-binding residues include Cys-43, Cys-48, Cys-54, Cys-69, Cys-73, Cys-76, and Ser-282. Positions 55 to 271 (YAQKTATFLL…GAVARDLGFA (217 aa)) constitute a Radical SAM core domain.

This sequence belongs to the radical SAM superfamily. Lipoyl synthase family. [4Fe-4S] cluster is required as a cofactor.

Its subcellular location is the cytoplasm. The enzyme catalyses [[Fe-S] cluster scaffold protein carrying a second [4Fe-4S](2+) cluster] + N(6)-octanoyl-L-lysyl-[protein] + 2 oxidized [2Fe-2S]-[ferredoxin] + 2 S-adenosyl-L-methionine + 4 H(+) = [[Fe-S] cluster scaffold protein] + N(6)-[(R)-dihydrolipoyl]-L-lysyl-[protein] + 4 Fe(3+) + 2 hydrogen sulfide + 2 5'-deoxyadenosine + 2 L-methionine + 2 reduced [2Fe-2S]-[ferredoxin]. Its pathway is protein modification; protein lipoylation via endogenous pathway; protein N(6)-(lipoyl)lysine from octanoyl-[acyl-carrier-protein]: step 2/2. Catalyzes the radical-mediated insertion of two sulfur atoms into the C-6 and C-8 positions of the octanoyl moiety bound to the lipoyl domains of lipoate-dependent enzymes, thereby converting the octanoylated domains into lipoylated derivatives. This Gloeobacter violaceus (strain ATCC 29082 / PCC 7421) protein is Lipoyl synthase 2.